The primary structure comprises 280 residues: RAD52 motif-containing protein 1 (280 aa).

Positions 18–101 (KTIFIWDIQP…SPLKVRLSTK (84 aa)) constitute an RRM domain.

As to quaternary structure, homodimer.

The protein localises to the nucleus. The protein resides in the cytoplasm. Its subcellular location is the nucleolus. Functionally, may confer resistance to the antitumor agent cisplatin. Binds to DNA and RNA. This is RAD52 motif-containing protein 1 (rdm1) from Danio rerio (Zebrafish).